We begin with the raw amino-acid sequence, 616 residues long: tRNA 5-methylaminomethyl-2-thiouridine biosynthesis bifunctional protein MnmC (616 aa).

The interval 1–232 (MLRTIVPARL…KRHCMSARFA (232 aa)) is tRNA (mnm(5)s(2)U34)-methyltransferase. The FAD-dependent cmnm(5)s(2)U34 oxidoreductase stretch occupies residues 249 to 616 (IGGGVAGAAA…ARFAGNRKTA (368 aa)).

In the N-terminal section; belongs to the methyltransferase superfamily. tRNA (mnm(5)s(2)U34)-methyltransferase family. It in the C-terminal section; belongs to the DAO family. The cofactor is FAD.

It localises to the cytoplasm. It catalyses the reaction 5-aminomethyl-2-thiouridine(34) in tRNA + S-adenosyl-L-methionine = 5-methylaminomethyl-2-thiouridine(34) in tRNA + S-adenosyl-L-homocysteine + H(+). Its function is as follows. Catalyzes the last two steps in the biosynthesis of 5-methylaminomethyl-2-thiouridine (mnm(5)s(2)U) at the wobble position (U34) in tRNA. Catalyzes the FAD-dependent demodification of cmnm(5)s(2)U34 to nm(5)s(2)U34, followed by the transfer of a methyl group from S-adenosyl-L-methionine to nm(5)s(2)U34, to form mnm(5)s(2)U34. The chain is tRNA 5-methylaminomethyl-2-thiouridine biosynthesis bifunctional protein MnmC from Thiobacillus denitrificans (strain ATCC 25259 / T1).